We begin with the raw amino-acid sequence, 82 residues long: MSLSREKVLESIAQIVHDETGIDKGSVQLDKAFVDDLDIDSISMMTIVVNAEEKYGIEIPDDKVRELRTVGDAVDFIIAAKA.

The Carrier domain occupies 3 to 81 (LSREKVLESI…DAVDFIIAAK (79 aa)). An O-(pantetheine 4'-phosphoryl)serine modification is found at Ser-41.

The protein belongs to the acyl carrier protein (ACP) family. In terms of processing, 4'-phosphopantetheine is transferred from CoA to a specific serine of apo-ACP by AcpS. This modification is essential for activity because fatty acids are bound in thioester linkage to the sulfhydryl of the prosthetic group.

It localises to the cytoplasm. It functions in the pathway lipid metabolism; fatty acid biosynthesis. In terms of biological role, carrier of the growing fatty acid chain in fatty acid biosynthesis. The polypeptide is Acyl carrier protein (Tropheryma whipplei (strain Twist) (Whipple's bacillus)).